The sequence spans 143 residues: Large ribosomal subunit protein uL11 (143 aa).

It belongs to the universal ribosomal protein uL11 family. In terms of assembly, part of the ribosomal stalk of the 50S ribosomal subunit. Interacts with L10 and the large rRNA to form the base of the stalk. L10 forms an elongated spine to which L12 dimers bind in a sequential fashion forming a multimeric L10(L12)X complex. Post-translationally, one or more lysine residues are methylated.

Forms part of the ribosomal stalk which helps the ribosome interact with GTP-bound translation factors. This is Large ribosomal subunit protein uL11 from Paraburkholderia phytofirmans (strain DSM 17436 / LMG 22146 / PsJN) (Burkholderia phytofirmans).